The following is a 653-amino-acid chain: tRNA 5-methylaminomethyl-2-thiouridine biosynthesis bifunctional protein MnmC (653 aa).

The interval 1–233 (MKTAPITPGR…KRDITVARFT (233 aa)) is tRNA (mnm(5)s(2)U34)-methyltransferase. Residues 258-653 (IGAGLAGCAA…YALPRWRSDS (396 aa)) are FAD-dependent cmnm(5)s(2)U34 oxidoreductase.

The protein in the N-terminal section; belongs to the methyltransferase superfamily. tRNA (mnm(5)s(2)U34)-methyltransferase family. This sequence in the C-terminal section; belongs to the DAO family. It depends on FAD as a cofactor.

Its subcellular location is the cytoplasm. It carries out the reaction 5-aminomethyl-2-thiouridine(34) in tRNA + S-adenosyl-L-methionine = 5-methylaminomethyl-2-thiouridine(34) in tRNA + S-adenosyl-L-homocysteine + H(+). Its function is as follows. Catalyzes the last two steps in the biosynthesis of 5-methylaminomethyl-2-thiouridine (mnm(5)s(2)U) at the wobble position (U34) in tRNA. Catalyzes the FAD-dependent demodification of cmnm(5)s(2)U34 to nm(5)s(2)U34, followed by the transfer of a methyl group from S-adenosyl-L-methionine to nm(5)s(2)U34, to form mnm(5)s(2)U34. This chain is tRNA 5-methylaminomethyl-2-thiouridine biosynthesis bifunctional protein MnmC, found in Methylibium petroleiphilum (strain ATCC BAA-1232 / LMG 22953 / PM1).